We begin with the raw amino-acid sequence, 534 residues long: GPI transamidase component GPI17 (534 aa).

Residues 1–8 (MSNANLRK) lie on the Cytoplasmic side of the membrane. The helical transmembrane segment at 9 to 29 (WVGFCFVAIYLFLGVPLWYKL) threads the bilayer. Residues 30 to 472 (TTVYRASLPI…VQQNFFPQEH (443 aa)) lie on the Lumenal side of the membrane. 5 N-linked (GlcNAc...) asparagine glycosylation sites follow: Asn-100, Asn-170, Asn-228, Asn-247, and Asn-299. A helical transmembrane segment spans residues 473–493 (MIAVYLPLLGPISAVMFFGFY). Topologically, residues 494-534 (NVMKEKNQKSKKNGTEREVAKEKLELKEAQKLHAIDGEDEL) are cytoplasmic.

This sequence belongs to the PIGS family. As to quaternary structure, forms a complex with CDC91, GPI16, GPI8 and GAA1. N-glycosylated.

It localises to the endoplasmic reticulum membrane. It functions in the pathway glycolipid biosynthesis; glycosylphosphatidylinositol-anchor biosynthesis. Functionally, component of the GPI transamidase complex. Involved in transfer of GPI to proteins. This is GPI transamidase component GPI17 (GPI17) from Saccharomyces cerevisiae (strain ATCC 204508 / S288c) (Baker's yeast).